The following is a 4960-amino-acid chain: Malformin synthetase mlfA (4960 aa).

An adenylation 1 region spans residues 194 to 564; the sequence is ERHATNRPHS…CGRADTQVKL (371 aa). Residues 705–778 enclose the Carrier 1 domain; the sequence is SRLEQEVQLA…EAASLAEVQE (74 aa). Ser-739 carries the O-(pantetheine 4'-phosphoryl)serine modification. Residues 816 to 1247 are condensation 1; it reads EDVFPCTTMQ…ALNTLSLLQA (432 aa). The adenylation 2 stretch occupies residues 1275-1650; that stretch reads DRWVTRQPEG…GRKDTQVKLR (376 aa). Residues 1777-1854 form the Carrier 2 domain; the sequence is TPASELERTL…HLAAEVGEPA (78 aa). Disordered stretches follow at residues 1855–1883 and 1917–1943; these read GQSA…NDGV and GGSS…KKNA. 2 stretches are compositionally biased toward low complexity: residues 1857–1881 and 1919–1936; these read SASS…STND and SSSN…SSSS. Residues 1989-2404 are condensation 2; it reads EDIYPATALQ…AVSCSDKETL (416 aa). Residues 2427–2819 are adenylation 3; sequence RRTPHAPAVC…IGRRDGQLKL (393 aa). One can recognise a Carrier 3 domain in the interval 2955–3031; sequence RPVTSQEREM…QLICHINTIR (77 aa). O-(pantetheine 4'-phosphoryl)serine is present on Ser-2992. Condensation stretches follow at residues 3049–3464 and 3520–3889; these read VALA…FTFP and SGYV…EQLV. An adenylation 4 region spans residues 3914-4304; the sequence is HNSRQAVCAW…VGRKDNQIKF (391 aa). In terms of domain architecture, Carrier 4 spans 4438–4514; that stretch reads MPSTAAERKM…DLSDQAKSLI (77 aa). Residue Ser-4475 is modified to O-(pantetheine 4'-phosphoryl)serine. A condensation 5 region spans residues 4551–4878; it reads DVLPTTSFQH…LQTIVQHQNN (328 aa).

Belongs to the NRP synthetase family.

It participates in secondary metabolite biosynthesis. Nonribosomal peptide synthetase; part of the gene cluster that mediates the biosynthesis of malformins, cyclic pentapeptides with a disulfide bond between 2 consecutive cysteins, that show potential anti-tumor as well as antimalarial and antitrypanosomal properties. The nonribosomal peptide synthetase mlfA is responsible of the formation of the cyclic pentapeptide. The malformin biosynthesis clusters in malformin-producing fungi also contain enzymes involved in the formation of the disulfide bond between the two consecutive cysteins within malformins, in addition to additional tailoring enzymes such as methyltransferases or oxidoreductases. They are also composed of up to 4 major facilitator superfamily transporters, and transcription factors probably involved in the regulation of the expression of those clusters. This Aspergillus neoniger (strain CBS 115656) protein is Malformin synthetase mlfA.